We begin with the raw amino-acid sequence, 396 residues long: Elongation factor Tu 1 (396 aa).

Residues 10–206 enclose the tr-type G domain; the sequence is KPHCNVGTIG…AVDDYIPQPE (197 aa). The tract at residues 19-26 is G1; sequence GHVDHGKT. Residue 19–26 coordinates GTP; it reads GHVDHGKT. T26 serves as a coordination point for Mg(2+). The tract at residues 60–64 is G2; it reads GITIS. The segment at 81 to 84 is G3; the sequence is DCPG. GTP-binding positions include 81–85 and 136–139; these read DCPGH and NKCD. Residues 136 to 139 form a G4 region; the sequence is NKCD. The tract at residues 174–176 is G5; the sequence is SAL.

This sequence belongs to the TRAFAC class translation factor GTPase superfamily. Classic translation factor GTPase family. EF-Tu/EF-1A subfamily. In terms of assembly, monomer.

The protein resides in the cytoplasm. It catalyses the reaction GTP + H2O = GDP + phosphate + H(+). Functionally, GTP hydrolase that promotes the GTP-dependent binding of aminoacyl-tRNA to the A-site of ribosomes during protein biosynthesis. The sequence is that of Elongation factor Tu 1 from Rhodospirillum rubrum (strain ATCC 11170 / ATH 1.1.1 / DSM 467 / LMG 4362 / NCIMB 8255 / S1).